Reading from the N-terminus, the 300-residue chain is Putative zinc finger protein 705EP (300 aa).

Residues 7-78 enclose the KRAB domain; the sequence is VTFEDVAIDF…GREFLQDQNP (72 aa). The C2H2-type 1; degenerate zinc-finger motif lies at 172 to 194; the sequence is YQCNLCEKAYTNCFHLRRPKMTH. C2H2-type zinc fingers lie at residues 200–222 and 228–250; these read YTCH…EKTH and YKCH…ERTH. Residues 256–278 form a C2H2-type 4; degenerate zinc finger; sequence YECDNSGKAFSQSSGFRGNKIIH.

Belongs to the krueppel C2H2-type zinc-finger protein family.

The protein localises to the nucleus. In terms of biological role, may be involved in transcriptional regulation. This Homo sapiens (Human) protein is Putative zinc finger protein 705EP.